The chain runs to 510 residues: RNA-splicing ligase RtcB homolog (510 aa).

Positions 124, 127, 232, 264, and 358 each coordinate Mn(2+). 231 to 235 is a GMP binding site; the sequence is NHYAE. Residues 358–359, 407–410, S414, 433–436, and K509 each bind GMP; these read HN, GGTM, and HGAG. Residue H433 is the GMP-histidine intermediate of the active site.

Belongs to the RtcB family. In terms of assembly, catalytic component of the tRNA-splicing ligase complex. The cofactor is Mn(2+).

The enzyme catalyses a 3'-end 3'-phospho-ribonucleotide-RNA + a 5'-end dephospho-ribonucleoside-RNA + GTP = a ribonucleotidyl-ribonucleotide-RNA + GMP + diphosphate. The catalysed reaction is a 3'-end 2',3'-cyclophospho-ribonucleotide-RNA + a 5'-end dephospho-ribonucleoside-RNA + GTP + H2O = a ribonucleotidyl-ribonucleotide-RNA + GMP + diphosphate + H(+). Its function is as follows. Catalytic subunit of the tRNA-splicing ligase complex that acts by directly joining spliced tRNA halves to mature-sized tRNAs by incorporating the precursor-derived splice junction phosphate into the mature tRNA as a canonical 3',5'-phosphodiester. May act as an RNA ligase with broad substrate specificity, and may function toward other RNAs. The polypeptide is RNA-splicing ligase RtcB homolog (Trichoplax adhaerens (Trichoplax reptans)).